The chain runs to 356 residues: 45 kDa calcium-binding protein (356 aa).

The N-terminal stretch at Met-1–Ala-29 is a signal peptide. An N-linked (GlcNAc...) asparagine glycan is attached at Asn-33. EF-hand domains are found at residues Lys-92–Glu-127, Glu-131–Leu-166, Met-227–Asn-262, Trp-272–Tyr-307, and Asn-308–Ser-343. Ca(2+)-binding residues include Asp-105, Asp-107, Asp-109, Lys-111, Glu-116, Asp-144, Asp-146, Asp-148, His-150, Glu-155, Asp-240, Asp-242, Asp-244, Lys-246, Glu-251, Asp-285, Asn-287, Asp-289, Glu-296, Asp-321, Asn-323, Asn-325, His-327, and Glu-332.

Belongs to the CREC family.

Its subcellular location is the golgi apparatus lumen. In terms of biological role, may regulate calcium-dependent activities in the endoplasmic reticulum lumen or post-ER compartment. In Gallus gallus (Chicken), this protein is 45 kDa calcium-binding protein (SDF4).